A 179-amino-acid polypeptide reads, in one-letter code: Protein GrpE (179 aa).

A disordered region spans residues 1 to 20 (MSEETKEEIKNEKVDEEVTE).

Belongs to the GrpE family. Homodimer.

It localises to the cytoplasm. In terms of biological role, participates actively in the response to hyperosmotic and heat shock by preventing the aggregation of stress-denatured proteins, in association with DnaK and GrpE. It is the nucleotide exchange factor for DnaK and may function as a thermosensor. Unfolded proteins bind initially to DnaJ; upon interaction with the DnaJ-bound protein, DnaK hydrolyzes its bound ATP, resulting in the formation of a stable complex. GrpE releases ADP from DnaK; ATP binding to DnaK triggers the release of the substrate protein, thus completing the reaction cycle. Several rounds of ATP-dependent interactions between DnaJ, DnaK and GrpE are required for fully efficient folding. This is Protein GrpE from Lactococcus lactis subsp. lactis (strain IL1403) (Streptococcus lactis).